Here is a 338-residue protein sequence, read N- to C-terminus: uncharacterized protein (338 aa).

This is an uncharacterized protein from Bacillus subtilis (strain 168).